The chain runs to 207 residues: Thymidylate kinase (207 aa).

ATP is bound at residue 7 to 14 (GCEGTGKT).

It belongs to the thymidylate kinase family.

It catalyses the reaction dTMP + ATP = dTDP + ADP. Functionally, phosphorylation of dTMP to form dTDP in both de novo and salvage pathways of dTTP synthesis. The sequence is that of Thymidylate kinase from Aster yellows witches'-broom phytoplasma (strain AYWB).